The following is a 639-amino-acid chain: 3D-(3,5/4)-trihydroxycyclohexane-1,2-dione hydrolase (639 aa).

Residue E65 participates in thiamine diphosphate binding. The thiamine pyrophosphate binding stretch occupies residues 437-517 (SLPGDLQRMW…INIILFDNSG (81 aa)). Mg(2+) is bound by residues D488 and N515.

It belongs to the TPP enzyme family. Mg(2+) is required as a cofactor. It depends on thiamine diphosphate as a cofactor.

The catalysed reaction is 3D-3,5/4-trihydroxycyclohexane-1,2-dione + H2O = 5-deoxy-D-glucuronate + H(+). The protein operates within polyol metabolism; myo-inositol degradation into acetyl-CoA; acetyl-CoA from myo-inositol: step 3/7. In terms of biological role, involved in the cleavage of the C1-C2 bond of 3D-(3,5/4)-trihydroxycyclohexane-1,2-dione (THcHDO) to yield 5-deoxy-glucuronate (5DG). The protein is 3D-(3,5/4)-trihydroxycyclohexane-1,2-dione hydrolase of Geobacillus thermodenitrificans (strain NG80-2).